We begin with the raw amino-acid sequence, 235 residues long: MPRKHLIASQTNKKQQSNAKQLQKLAKRIAAAVKKGGSNIDANPQLKVAVELALAHGLSADSIKRNIHGSEKDPTKLSEFCYEIFGPNGVGIIVFGLTDNPNRLLSSLNGYIAKLKAQLAKPNSVKINFEEKGIALVKHNNFTQDELIELLISNNINLLDLNEDDDSFEVVVDSPSYFALKDLLVKNSFTIEASELRLIPLLTVELNAEQHTLLNRFLNACEEDDDIQTVVHNAL.

Belongs to the TACO1 family.

The protein localises to the cytoplasm. This Mycoplasma pneumoniae (strain ATCC 29342 / M129 / Subtype 1) (Mycoplasmoides pneumoniae) protein is Probable transcriptional regulatory protein MPN_478.